Here is a 426-residue protein sequence, read N- to C-terminus: Pyrophosphate--fructose 6-phosphate 1-phosphotransferase 2 (426 aa).

Glycine 15 is a diphosphate binding site. Aspartate 114 provides a ligand contact to Mg(2+). Substrate contacts are provided by residues 140 to 142 (TID), 186 to 188 (MGR), glutamate 247, and 308 to 311 (YELR). Aspartate 142 functions as the Proton acceptor in the catalytic mechanism.

Belongs to the phosphofructokinase type A (PFKA) family. PPi-dependent PFK group II subfamily. Clade 'Short' sub-subfamily. In terms of assembly, homotetramer. Mg(2+) is required as a cofactor.

The protein resides in the cytoplasm. It catalyses the reaction beta-D-fructose 6-phosphate + diphosphate = beta-D-fructose 1,6-bisphosphate + phosphate + H(+). It participates in carbohydrate degradation; glycolysis; D-glyceraldehyde 3-phosphate and glycerone phosphate from D-glucose: step 3/4. With respect to regulation, non-allosteric. Functionally, catalyzes the phosphorylation of D-fructose 6-phosphate, the first committing step of glycolysis. Uses inorganic phosphate (PPi) as phosphoryl donor instead of ATP like common ATP-dependent phosphofructokinases (ATP-PFKs), which renders the reaction reversible, and can thus function both in glycolysis and gluconeogenesis. Consistently, PPi-PFK can replace the enzymes of both the forward (ATP-PFK) and reverse (fructose-bisphosphatase (FBPase)) reactions. The protein is Pyrophosphate--fructose 6-phosphate 1-phosphotransferase 2 (pfk2) of Trichomonas vaginalis (strain ATCC PRA-98 / G3).